We begin with the raw amino-acid sequence, 790 residues long: uncharacterized protein (790 aa).

Residues 37–172 (APVPVPVNGN…NGGVIDAKIK (136 aa)) form the TBDR plug domain. A TBDR beta-barrel domain is found at 178 to 790 (DSKVKLGYRT…TFWLDVSMKF (613 aa)).

Belongs to the TonB-dependent receptor family.

Its subcellular location is the cell outer membrane. This is an uncharacterized protein from Escherichia coli (strain K12).